Consider the following 317-residue polypeptide: MWLYLAVFVGLYYLLHWYRERQVLSHLRDKYVFITGCDSGFGKLLARQLDARGLRVLAACLTEKGAEQLRGQTSDRLETVTLDVTKTESVAAAAQWVKECVRDKGLWGLVNNAGISLPTAPNELLTKQDFVTILDVNLLGVIDVTLSLLPLVRRARGRVVNVSSVMGRVSLFGGGYCISKYGVEAFSDSLRRELSYFGVKVAMIEPGYFKTAVTSKERFLKSFLEIWDRSSPEVKEAYGEKFVADYKKSAEQMEQKCTQDLSLVTNCMEHALIACHPRTRYSAGWDAKLLYLPMSYMPTFLVDAIMYWVSPSPAKAL.

An NAD(+)-binding site is contributed by 33–57 (FITGCDSGFGKLLARQLDARGLRVL). S164 serves as a coordination point for substrate. The Proton acceptor role is filled by Y176. Residues 289–309 (LLYLPMSYMPTFLVDAIMYWV) traverse the membrane as a helical segment.

It belongs to the short-chain dehydrogenases/reductases (SDR) family. In terms of assembly, homodimer. In terms of processing, not N-glycosylated. Highly expressed in adult liver (at protein level). Detected in endometrium, liver and foreskin. Detected in the spineous layers of adult skin, and at lower levels in basal and granular skin layers. Detected in fetal liver and lung.

The protein resides in the microsome membrane. The protein localises to the endoplasmic reticulum membrane. The catalysed reaction is all-trans-retinol--[retinol-binding protein] + NAD(+) = all-trans-retinal--[retinol-binding protein] + NADH + H(+). The enzyme catalyses all-trans-retinol + NAD(+) = all-trans-retinal + NADH + H(+). It carries out the reaction 13-cis-retinol + NAD(+) = 13-cis-retinal + NADH + H(+). It catalyses the reaction 11-cis-retinol + NAD(+) = 11-cis-retinal + NADH + H(+). The catalysed reaction is 9-cis-retinol + NAD(+) = 9-cis-retinal + NADH + H(+). The enzyme catalyses 5alpha-androstane-3alpha,17beta-diol + NAD(+) = 17beta-hydroxy-5alpha-androstan-3-one + NADH + H(+). It carries out the reaction androsterone + NAD(+) = 5alpha-androstan-3,17-dione + NADH + H(+). It participates in cofactor metabolism; retinol metabolism. Inhibited by citral, perillyl alcohol, geraniol, farnesol and geranyl geraniol. Oxidoreductase with a preference for NAD. Oxidizes all-trans-retinol, 9-cis-retinol, 11-cis-retinol and 13-cis-retinol to the corresponding aldehydes. Has higher activity towards CRBP-bound retinol than with free retinol. Also oxidizes 3-alpha-hydroxysteroids. Oxidizes androstanediol and androsterone to dihydrotestosterone and androstanedione. Can also catalyze the reverse reaction. In Homo sapiens (Human), this protein is Retinol dehydrogenase 16.